The chain runs to 313 residues: Olfactory receptor 56A5 (313 aa).

Residues Met1–Pro33 are Extracellular-facing. Asn6 and Asn7 each carry an N-linked (GlcNAc...) asparagine glycan. A helical transmembrane segment spans residues Leu34 to Leu54. Residues Glu55 to Ser67 are Cytoplasmic-facing. A helical transmembrane segment spans residues Leu68–Phe88. At Trp89–Cys100 the chain is on the extracellular side. Cys100 and Cys182 are joined by a disulfide. A helical transmembrane segment spans residues Phe101–Met121. Over Ala122 to Arg146 the chain is Cytoplasmic. Residues Ala147–Ser167 traverse the membrane as a helical segment. Residues Arg168–Phe203 lie on the Extracellular side of the membrane. N-linked (GlcNAc...) asparagine glycosylation is found at Asn184 and Asn198. Residues Val204–Ile224 traverse the membrane as a helical segment. The Cytoplasmic segment spans residues Leu225–Ser246. The helical transmembrane segment at His247–Ala267 threads the bilayer. The Extracellular portion of the chain corresponds to Arg268 to Pro276. A helical transmembrane segment spans residues Ile277–Val297. The Cytoplasmic segment spans residues Arg298 to Leu313.

The protein belongs to the G-protein coupled receptor 1 family.

It localises to the cell membrane. Odorant receptor. The chain is Olfactory receptor 56A5 (OR56A5) from Homo sapiens (Human).